Here is a 438-residue protein sequence, read N- to C-terminus: Thymidine phosphorylase (438 aa).

It belongs to the thymidine/pyrimidine-nucleoside phosphorylase family. Homodimer.

It catalyses the reaction thymidine + phosphate = 2-deoxy-alpha-D-ribose 1-phosphate + thymine. Its pathway is pyrimidine metabolism; dTMP biosynthesis via salvage pathway; dTMP from thymine: step 1/2. In terms of biological role, the enzymes which catalyze the reversible phosphorolysis of pyrimidine nucleosides are involved in the degradation of these compounds and in their utilization as carbon and energy sources, or in the rescue of pyrimidine bases for nucleotide synthesis. This Sinorhizobium fredii (strain NBRC 101917 / NGR234) protein is Thymidine phosphorylase.